The chain runs to 164 residues: Endoribonuclease YbeY (164 aa).

3 residues coordinate Zn(2+): His-114, His-118, and His-124.

This sequence belongs to the endoribonuclease YbeY family. It depends on Zn(2+) as a cofactor.

Its subcellular location is the cytoplasm. Single strand-specific metallo-endoribonuclease involved in late-stage 70S ribosome quality control and in maturation of the 3' terminus of the 16S rRNA. The polypeptide is Endoribonuclease YbeY (Mycoplasmoides gallisepticum (strain R(low / passage 15 / clone 2)) (Mycoplasma gallisepticum)).